We begin with the raw amino-acid sequence, 227 residues long: Cytochrome c oxidase subunit 2 (227 aa).

Residues 1-14 lie on the Mitochondrial intermembrane side of the membrane; the sequence is MAYPFQLGLQDATS. The helical transmembrane segment at 15-45 threads the bilayer; sequence PIMEELLHFHDHTLMIVFLISSLILYIISLM. Residues 46 to 59 lie on the Mitochondrial matrix side of the membrane; the sequence is LTTKLTHTSTMDAQ. The helical transmembrane segment at 60 to 87 threads the bilayer; that stretch reads EVETVWTILPAIILILIALPSLRILYMM. The Mitochondrial intermembrane segment spans residues 88-227; sequence DEINNPSLTV…YFETWSALMV (140 aa). 6 residues coordinate Cu cation: histidine 161, cysteine 196, glutamate 198, cysteine 200, histidine 204, and methionine 207. Glutamate 198 lines the Mg(2+) pocket. Tyrosine 218 is subject to Phosphotyrosine.

It belongs to the cytochrome c oxidase subunit 2 family. As to quaternary structure, component of the cytochrome c oxidase (complex IV, CIV), a multisubunit enzyme composed of 14 subunits. The complex is composed of a catalytic core of 3 subunits MT-CO1, MT-CO2 and MT-CO3, encoded in the mitochondrial DNA, and 11 supernumerary subunits COX4I, COX5A, COX5B, COX6A, COX6B, COX6C, COX7A, COX7B, COX7C, COX8 and NDUFA4, which are encoded in the nuclear genome. The complex exists as a monomer or a dimer and forms supercomplexes (SCs) in the inner mitochondrial membrane with NADH-ubiquinone oxidoreductase (complex I, CI) and ubiquinol-cytochrome c oxidoreductase (cytochrome b-c1 complex, complex III, CIII), resulting in different assemblies (supercomplex SCI(1)III(2)IV(1) and megacomplex MCI(2)III(2)IV(2)). Found in a complex with TMEM177, COA6, COX18, COX20, SCO1 and SCO2. Interacts with TMEM177 in a COX20-dependent manner. Interacts with COX20. Interacts with COX16. It depends on Cu cation as a cofactor.

It is found in the mitochondrion inner membrane. The catalysed reaction is 4 Fe(II)-[cytochrome c] + O2 + 8 H(+)(in) = 4 Fe(III)-[cytochrome c] + 2 H2O + 4 H(+)(out). In terms of biological role, component of the cytochrome c oxidase, the last enzyme in the mitochondrial electron transport chain which drives oxidative phosphorylation. The respiratory chain contains 3 multisubunit complexes succinate dehydrogenase (complex II, CII), ubiquinol-cytochrome c oxidoreductase (cytochrome b-c1 complex, complex III, CIII) and cytochrome c oxidase (complex IV, CIV), that cooperate to transfer electrons derived from NADH and succinate to molecular oxygen, creating an electrochemical gradient over the inner membrane that drives transmembrane transport and the ATP synthase. Cytochrome c oxidase is the component of the respiratory chain that catalyzes the reduction of oxygen to water. Electrons originating from reduced cytochrome c in the intermembrane space (IMS) are transferred via the dinuclear copper A center (CU(A)) of subunit 2 and heme A of subunit 1 to the active site in subunit 1, a binuclear center (BNC) formed by heme A3 and copper B (CU(B)). The BNC reduces molecular oxygen to 2 water molecules using 4 electrons from cytochrome c in the IMS and 4 protons from the mitochondrial matrix. This is Cytochrome c oxidase subunit 2 (MT-CO2) from Canis simensis (Ethiopian wolf).